The sequence spans 485 residues: Heat stress transcription factor A-1d (485 aa).

2 disordered regions span residues 1 to 34 (MDVS…SSNA) and 126 to 149 (RRKP…QNSS). The DNA-binding element occupies 35–129 (PPPFLSKTYD…LLQSITRRKP (95 aa)). Over residues 136 to 146 (GHQRSQHSNGQ) the composition is skewed to low complexity. The tract at residues 152 to 218 (ACVEVGKFGL…QLMSFLAKAV (67 aa)) is hydrophobic repeat HR-A/B. 2 disordered regions span residues 229 to 269 (QQQN…GQIV) and 436 to 461 (PVPD…DKTK). The Bipartite nuclear localization signal motif lies at 238–252 (NRRISDTSKKRRFKR). Over residues 441–455 (MDSTPVDNETEQEQN) the composition is skewed to polar residues. The Nuclear export signal signature appears at 472-480 (LLSPETLDL).

The protein belongs to the HSF family. Class A subfamily. As to quaternary structure, homotrimer. Interacts with HSP90-2. Post-translationally, exhibits temperature-dependent phosphorylation.

The protein localises to the cytoplasm. It is found in the nucleus. Transcriptional regulator that specifically binds DNA sequence 5'-AGAAnnTTCT-3' known as heat shock promoter elements (HSE). The protein is Heat stress transcription factor A-1d (HSFA1D) of Arabidopsis thaliana (Mouse-ear cress).